A 113-amino-acid chain; its full sequence is ATP-dependent Clp protease adapter protein ClpS (113 aa).

This sequence belongs to the ClpS family. Binds to the N-terminal domain of the chaperone ClpA.

Its function is as follows. Involved in the modulation of the specificity of the ClpAP-mediated ATP-dependent protein degradation. This Leptospira biflexa serovar Patoc (strain Patoc 1 / Ames) protein is ATP-dependent Clp protease adapter protein ClpS.